Here is a 370-residue protein sequence, read N- to C-terminus: Aminomethyltransferase (370 aa).

Belongs to the GcvT family. In terms of assembly, the glycine cleavage system is composed of four proteins: P, T, L and H.

The enzyme catalyses N(6)-[(R)-S(8)-aminomethyldihydrolipoyl]-L-lysyl-[protein] + (6S)-5,6,7,8-tetrahydrofolate = N(6)-[(R)-dihydrolipoyl]-L-lysyl-[protein] + (6R)-5,10-methylene-5,6,7,8-tetrahydrofolate + NH4(+). The glycine cleavage system catalyzes the degradation of glycine. This Clostridium botulinum (strain 657 / Type Ba4) protein is Aminomethyltransferase.